We begin with the raw amino-acid sequence, 574 residues long: Amino-acid acetyltransferase, mitochondrial (574 aa).

The N-terminal 13 residues, 1 to 13, are a transit peptide targeting the mitochondrion; sequence MWRRIFAHGLKYD. Residues 392–560 form the N-acetyltransferase domain; it reads KGAKPSNNSP…KRLREFMRSV (169 aa).

It belongs to the acetyltransferase family. Interacts with the acetylglutamate kinase chain of AGR5,6.

Its subcellular location is the mitochondrion. It carries out the reaction L-glutamate + acetyl-CoA = N-acetyl-L-glutamate + CoA + H(+). It functions in the pathway amino-acid biosynthesis; L-arginine biosynthesis; N(2)-acetyl-L-ornithine from L-glutamate: step 1/4. With respect to regulation, feedback inhibition by L-arginine. N-acetylglutamate synthase involved in arginine biosynthesis. The protein is Amino-acid acetyltransferase, mitochondrial (ARG2) of Saccharomyces cerevisiae (strain YJM789) (Baker's yeast).